The chain runs to 1076 residues: Enhancer of mRNA-decapping protein 4-like protein pdc1 (1076 aa).

2 stretches are compositionally biased toward low complexity: residues 1-19 (MNEQ…LPNL) and 53-69 (SSLL…SNQS). Disordered regions lie at residues 1–82 (MNEQ…ASHS), 95–127 (GAKP…FNPV), and 139–204 (STGP…AEEQ). A compositionally biased stretch (polar residues) spans 70-82 (PSNSGPKYYASHS). The span at 153–173 (NDSQDTAFQSSRNMPSDTSVA) shows a compositional bias: polar residues. Residues 174–184 (SPDYSHSQSSS) show a composition bias toward low complexity. A compositionally biased stretch (polar residues) spans 185–195 (PIANYQESGNS). 2 WD repeats span residues 292–334 (NSPN…STSE) and 402–441 (DTGI…PSTP). Disordered stretches follow at residues 666-714 (RHST…SPSS) and 892-934 (TAPD…PAQG). Polar residues predominate over residues 669-688 (TASPSTVNSGFSTPRSQATG). 2 positions are modified to phosphoserine: Ser-671 and Ser-673. Phosphothreonine is present on Thr-674. A compositionally biased stretch (basic and acidic residues) spans 695 to 706 (DKGERFETKDKS). The interaction with dcp2 stretch occupies residues 789 to 1076 (MQVALKEEIA…ISEISVASSN (288 aa)). Ser-1075 is subject to Phosphoserine.

Belongs to the WD repeat EDC4 family. In terms of assembly, interacts with dcp2; via C-terminus.

It is found in the cytoplasm. The protein localises to the P-body. Its function is as follows. Involved in P-body formation. Acts as a functional homolog of human EDC4, which plays a role in mRNA decapping in the process of mRNA degradation. Enhances the decapping activity of dcp2. Together with edc3, acts as a scaffolding protein sufficient for the phase transition of the components of the 5' to 3' mRNA degradation machinery to form P-bodies. Intermolecular interactions between the edc3 Sm domain and at least 10 helical leucine-rich motifs in dcp2 and pdc1 build the core of the interaction network of this spontaneous clustering process. The sequence is that of Enhancer of mRNA-decapping protein 4-like protein pdc1 from Schizosaccharomyces pombe (strain 972 / ATCC 24843) (Fission yeast).